A 420-amino-acid polypeptide reads, in one-letter code: Phosphoglycerate kinase, cytosolic (420 aa).

Valine 23, aspartate 24, phenylalanine 25, asparagine 26, arginine 39, serine 61, histidine 62, glycine 64, arginine 65, arginine 135, histidine 171, and arginine 172 together coordinate (2R)-3-phosphoglycerate. Residues glycine 217 and alanine 218 each contribute to the ADP site. Residue glycine 217 coordinates CDP. Positions 218 and 219 each coordinate AMP. Alanine 218 contacts ATP. Alanine 218 serves as a coordination point for Mg(2+). Lysine 219 is a (2R)-3-phosphoglycerate binding site. Aspartate 222 is a CDP binding site. Aspartate 222 serves as a coordination point for Mg(2+). Lysine 223 and glycine 241 together coordinate ADP. Position 223 (lysine 223) interacts with AMP. Position 223 (lysine 223) interacts with ATP. CDP is bound at residue glycine 241. AMP-binding residues include alanine 242 and alanine 314. Residues alanine 242 and alanine 314 each coordinate ATP. Residues alanine 314 and asparagine 338 each coordinate ADP. 2 residues coordinate CDP: glycine 339 and phenylalanine 344. The ADP site is built by phenylalanine 344, glutamate 345, glutamate 377, and serine 378. Residue glutamate 345 coordinates AMP. 3 residues coordinate ATP: glutamate 345, glutamate 377, and serine 378. Glutamate 377 is a Mg(2+) binding site.

It belongs to the phosphoglycerate kinase family. Monomer. The cofactor is Mg(2+).

It localises to the cytoplasm. It carries out the reaction (2R)-3-phosphoglycerate + ATP = (2R)-3-phospho-glyceroyl phosphate + ADP. Its pathway is carbohydrate degradation; glycolysis; pyruvate from D-glyceraldehyde 3-phosphate: step 2/5. The polypeptide is Phosphoglycerate kinase, cytosolic (Trypanosoma brucei brucei).